The following is a 261-amino-acid chain: MSESLHLTRNGSILEITLDRPKANAIDAKTSFEMGEVFLNFRDDPQLRVAIITGAGEKFFSAGWDLKAAAEGEAPDADFGPGGFAGLTEIFNLDKPVIAAVNGYAFGGGFELALAADFIVCADNASFALPEAKLGIVPDSGGVLRLPKILPPAIVNEMVMTGRRMGAEEALRWGVVNRVVSQAELMDNARELAQQLVNSAPLAIAALKEIYRTTSEMPVEEAYRYIRSGVLKHYPSVLHSEDAIEGPLAFAEKRDPVWKGR.

Residue glutamate 111 is the Nucleophile of the active site. The active-site Proton acceptor is the glutamate 131.

Belongs to the enoyl-CoA hydratase/isomerase family.

It carries out the reaction (R)-carnitinyl-CoA = crotonobetainyl-CoA + H2O. It functions in the pathway amine and polyamine metabolism; carnitine metabolism. Its function is as follows. Catalyzes the reversible dehydration of L-carnitinyl-CoA to crotonobetainyl-CoA. This Escherichia coli O6:K15:H31 (strain 536 / UPEC) protein is Carnitinyl-CoA dehydratase.